The chain runs to 282 residues: MTVLPDSENGYLLNYEDQEKRRMNMQHDLIKTYMGKLILAPLPFDQPNLRVLDSGTFNGLWLEDASTLLQSPTLVGTDVSPTAFPAKRPPNTEFHVQSISDPWPTEWRDSFDLVHQKLVIACVPPDEGRQALYRLIDLAKPGTGWVQFTEGSLEHLTPEQRKQYPVLARFQSLVAEMLPHFRWNPRPGKLVRQWLEEYGLQEVQEKVMEIPIGAGNPDPKLGEMAKQNMLEVVSNFRTAATRLPDGTGIRAEDFDPILRDIKVEFETVGGILRFNTVWGRRP.

Belongs to the methyltransferase superfamily. LaeA methyltransferase family.

It functions in the pathway mycotoxin biosynthesis. In terms of biological role, N-methyltransferase; part of the gene cluster that mediates the biosynthesis of gliotoxin, a member of the epipolythiodioxopiperazine (ETP) class of toxins characterized by a disulfide bridged cyclic dipeptide. The first step in gliotoxin biosynthesis is the condensation of serine and phenylalanine to form the cyclo-L-phenylalanyl-L-serine diketopiperazine (DKP) by the NRPS gliP. GliP is also able to produce the DKP cyclo-L-tryptophanyl-L-serine, suggesting that the substrate specificity of the first adenylation (A) domain in gliP is sufficiently relaxed to accommodate both L-Phe and L-Trp. The cytochrome P450 monooxygenase gliC has been shown to catalyze the subsequent hydroxylation of the alpha-carbon of L-Phe in cyclo-L-phenylalanyl-L-serine whereas the second cytochrome P450 enzyme, gliF, is presumably involved in the modification of the DKP side chain. The glutathione S-transferase (GST) gliG then forms a bis-glutathionylated biosynthetic intermediate which is responsible for the sulfurization of gliotoxin. This bis-glutathionylated intermediate is subsequently processed by the gamma-glutamyl cyclotransferase gliK to remove both gamma-glutamyl moieties. Subsequent processing via gliI yields a biosynthetic intermediate, which is N-methylated via the N-methyltransferase gliN, before the gliotoxin oxidoreductase gliT-mediated disulfide bridge closure. GliN-mediated amide methylation confers stability to ETP, damping the spontaneous formation of tri- and tetrasulfides. Intracellular dithiol gliotoxin oxidized by gliT is subsequently effluxed by gliA. Gliotoxin contributes to pathogenesis during invasive aspergillosis. In macrophages and neutrophils, gliotoxin showed inhibition of various different cell functions including cytokine production, antigen presentation, phagocytosis, and production of reactive oxygen species. The chain is N-methyltransferase gliN from Aspergillus fumigatus (strain ATCC MYA-4609 / CBS 101355 / FGSC A1100 / Af293) (Neosartorya fumigata).